The sequence spans 154 residues: uncharacterized protein (154 aa).

A run of 4 helical transmembrane segments spans residues 15–37 (DFSFIINSYATNAIFLAAYALIT), 58–80 (FAAMLAGGLVSWGIVSMPYWLWG), 95–116 (LGALDAIVGGIILGYSASFAFT), and 123–145 (LVISWMLANSISTLVVAIFFVPH).

The protein localises to the cell membrane. This is an uncharacterized protein from Archaeoglobus fulgidus (strain ATCC 49558 / DSM 4304 / JCM 9628 / NBRC 100126 / VC-16).